The primary structure comprises 552 residues: Putative transport protein YPN_3727 (552 aa).

6 consecutive transmembrane segments (helical) span residues 1–21 (MSAIALTVSMLALVAVLGLWI), 26–46 (IYGVGLGIGGVLFGGIIVGHF), 65–85 (FGLILFVYTIGIQVGPGFFSS), 96–116 (FAILMVVVGGLVTAIIHKLFA), 119–139 (LPIILGVFSGAVTNTPALGAA), and 158–178 (MGYAMAYPFGICGILLVMWLI). 2 consecutive RCK C-terminal domains span residues 192 to 276 (AFDS…VVGE) and 279 to 361 (DVTL…IVGN). Transmembrane regions (helical) follow at residues 371–391 (MLPVFIGVGLGVLLGSIPLFV), 393–413 (GFPAALRLGLAGGPLVVALIL), 439–459 (IVLFLSVVGLKSGGDFINTLV), 464–484 (LAWIGYGAMITGIPLLTVGIL), 493–513 (YLTLCGMLAGSMTDPPALAFA), and 530–550 (VYPLAMFLRIMSPQILAVLFW).

This sequence belongs to the AAE transporter (TC 2.A.81) family. YidE subfamily.

The protein localises to the cell membrane. The chain is Putative transport protein YPN_3727 from Yersinia pestis bv. Antiqua (strain Nepal516).